The sequence spans 554 residues: Oxygen-dependent choline dehydrogenase (554 aa).

4–33 (DYIIIGAGSAGNVLATRLTEDPNTTVLLLE) provides a ligand contact to FAD. Residue histidine 473 is the Proton acceptor of the active site.

The protein belongs to the GMC oxidoreductase family. Requires FAD as cofactor.

The enzyme catalyses choline + A = betaine aldehyde + AH2. The catalysed reaction is betaine aldehyde + NAD(+) + H2O = glycine betaine + NADH + 2 H(+). Its pathway is amine and polyamine biosynthesis; betaine biosynthesis via choline pathway; betaine aldehyde from choline (cytochrome c reductase route): step 1/1. Functionally, involved in the biosynthesis of the osmoprotectant glycine betaine. Catalyzes the oxidation of choline to betaine aldehyde and betaine aldehyde to glycine betaine at the same rate. The sequence is that of Oxygen-dependent choline dehydrogenase from Klebsiella pneumoniae (strain 342).